Consider the following 427-residue polypeptide: L-glutamine:2-deoxy-scyllo-inosose aminotransferase (427 aa).

Positions 1 to 20 (MPLQSSRLAVDNGTPVRGKP) are disordered. Lys-205 is subject to N6-(pyridoxal phosphate)lysine.

This sequence belongs to the DegT/DnrJ/EryC1 family. L-glutamine:2-deoxy-scyllo-inosose/scyllo-inosose aminotransferase subfamily. Pyridoxal 5'-phosphate is required as a cofactor.

It catalyses the reaction 2-deoxy-L-scyllo-inosose + L-glutamine = 2-deoxy-scyllo-inosamine + 2-oxoglutaramate. The catalysed reaction is 3-amino-2,3-dideoxy-scyllo-inosose + L-glutamine = 2-deoxystreptamine + 2-oxoglutaramate. It functions in the pathway metabolic intermediate biosynthesis; 2-deoxystreptamine biosynthesis; 2-deoxystreptamine from D-glucose 6-phosphate: step 2/4. It participates in antibiotic biosynthesis; kanamycin biosynthesis. In terms of biological role, catalyzes the PLP-dependent transamination of 2-deoxy-scyllo-inosose (2-DOI) to form 2-deoxy-scyllo-inosamine (2-DOIA) using L-glutamine as the amino donor. Also catalyzes the transamination of 3-amino-2,3-dideoxy-scyllo-inosose (keto-2-DOIA) into 2-deoxystreptamine (2-DOS). The protein is L-glutamine:2-deoxy-scyllo-inosose aminotransferase (kanB) of Streptomyces kanamyceticus.